A 717-amino-acid chain; its full sequence is Probable inactive histone-lysine N-methyltransferase SUVR2 (717 aa).

Over residues 61–73 (QAIQESEEKKADE) the composition is skewed to basic and acidic residues. Residues 61-136 (QAIQESEEKK…LGSPTLEGPS (76 aa)) form a disordered region. Residues 120–130 (SALASPSLGSP) are compositionally biased toward low complexity. Zn(2+)-binding residues include Cys445, Cys446, Cys449, Cys453, Cys462, Cys529, Cys533, Cys535, and Cys539. Residues 458–547 (MACRCATAFN…NCGNRVVQQG (90 aa)) enclose the Pre-SET domain. Residues 550 to 679 (NKLQVFFTPN…AMEELTWDYG (130 aa)) enclose the SET domain. S-adenosyl-L-methionine is bound by residues 561-563 (RGW) and 635-636 (NH). Cys638 is a binding site for Zn(2+). Tyr678 provides a ligand contact to S-adenosyl-L-methionine. Residues 690-706 (SPFHCQCGSDFCRVRKQ) enclose the Post-SET domain. Residues Cys694, Cys696, and Cys701 each coordinate Zn(2+).

Belongs to the class V-like SAM-binding methyltransferase superfamily. Histone-lysine methyltransferase family. Interacts with SUVR1, CHR19, CHR28 and itself. Interacts with CHR27.

It is found in the nucleus. The protein resides in the chromosome. In terms of biological role, probable inactive histone-lysine methyltransferase that acts as regulator of transctiptional gene silencing independently of histone H3K9 methylation. Contributes to transcriptional gene silencing at RNA-directed DNA methylation (RdDM) target loci but also at RdDM-independent target loci. Forms a complex with SUVR1 and associates with the SNF2-related chromatin-remodeling proteins CHR19, CHR27, and CHR28, thereby mediating nucleosome positioning and transcriptional silencing. Does not possess histone-lysine methyltransferase activity in vitro, and the conserved catalytic sites of SUVR2 are dispensable for its function in transcriptional gene silencing. This is Probable inactive histone-lysine N-methyltransferase SUVR2 (SUVR2) from Arabidopsis thaliana (Mouse-ear cress).